The chain runs to 317 residues: Protein-methionine-sulfoxide reductase catalytic subunit MsrP (317 aa).

The tat-type signal signal peptide spans 1 to 40 (MNKFTKTDVTPEKLFIQRRKIIQGMSVLSAAAAFPNLAAA). Mo-molybdopterin contacts are provided by residues Asn-72, 75–76 (YE), Cys-129, Thr-164, Asn-216, Arg-221, and 232–234 (SIK).

The protein belongs to the MsrP family. In terms of assembly, heterodimer of a catalytic subunit (MsrP) and a heme-binding subunit (MsrQ). Mo-molybdopterin is required as a cofactor. Predicted to be exported by the Tat system. The position of the signal peptide cleavage has not been experimentally proven.

The protein localises to the periplasm. It catalyses the reaction L-methionyl-[protein] + a quinone + H2O = L-methionyl-(S)-S-oxide-[protein] + a quinol. It carries out the reaction L-methionyl-[protein] + a quinone + H2O = L-methionyl-(R)-S-oxide-[protein] + a quinol. Functionally, part of the MsrPQ system that repairs oxidized periplasmic proteins containing methionine sulfoxide residues (Met-O), using respiratory chain electrons. Thus protects these proteins from oxidative-stress damage caused by reactive species of oxygen and chlorine generated by the host defense mechanisms. MsrPQ is essential for the maintenance of envelope integrity under bleach stress, rescuing a wide series of structurally unrelated periplasmic proteins from methionine oxidation. The catalytic subunit MsrP is non-stereospecific, being able to reduce both (R-) and (S-) diastereoisomers of methionine sulfoxide. This Actinobacillus succinogenes (strain ATCC 55618 / DSM 22257 / CCUG 43843 / 130Z) protein is Protein-methionine-sulfoxide reductase catalytic subunit MsrP.